A 1076-amino-acid chain; its full sequence is Regulator of G-protein signaling protein-like (1076 aa).

The 120-residue stretch at N645 to E764 folds into the RGS domain. Positions T834 to S852 are enriched in polar residues. The tract at residues T834–D854 is disordered. Residues V960–W982 traverse the membrane as a helical segment.

The protein localises to the membrane. The chain is Regulator of G-protein signaling protein-like (RGSL1) from Homo sapiens (Human).